Consider the following 323-residue polypeptide: MSQFADFYQLIAKSPLSHWLNTLPAQLSEWEQTSQHCKFSQWFNAVERLPMLTPARLDLLHGVEADCDPPLSAGQQAGIESLLRQLMPWRKGPFSLYGVSIDTEWRSDWKWERVLPHIAPLAGRLILDVGCGSGYHLWRMVGAGAQLAVGIDPMQLFYCQFAAVRKLLGGDQRAHLLPLGIEQLPALAAFDTVFSMGVLYHRRSPLDHLLQLKNQLVSGGELVLETLVIEGDSQQVLVPGERYAQMRNVYFIPSATALVSWLEKCGFVNVRHVDMSVTSTDEQRRTAWMTSESLADFLHSDDPRLTVEGHPAPLRAVIVAEKH.

Residues Lys-91, Trp-105, Lys-110, Gly-130, Ile-181–Glu-182, Met-196, Tyr-200, and Arg-315 contribute to the carboxy-S-adenosyl-L-methionine site.

It belongs to the class I-like SAM-binding methyltransferase superfamily. CmoB family. In terms of assembly, homotetramer.

The enzyme catalyses carboxy-S-adenosyl-L-methionine + 5-hydroxyuridine(34) in tRNA = 5-carboxymethoxyuridine(34) in tRNA + S-adenosyl-L-homocysteine + H(+). Its function is as follows. Catalyzes carboxymethyl transfer from carboxy-S-adenosyl-L-methionine (Cx-SAM) to 5-hydroxyuridine (ho5U) to form 5-carboxymethoxyuridine (cmo5U) at position 34 in tRNAs. The chain is tRNA U34 carboxymethyltransferase from Sodalis glossinidius (strain morsitans).